The chain runs to 437 residues: GTPase Era, mitochondrial (437 aa).

The N-terminal 43 residues, 1-43, are a transit peptide targeting the mitochondrion; the sequence is MAASSWRGAVLLRTVSGLWQAGPDAAREWMTRLPSLLGFQQRC. In terms of domain architecture, Era-type G spans 112–330; sequence RVLRVVLLGA…QYLLAQARPG (219 aa). Residues 120–127 form a G1 region; that stretch reads GAPNAGKS. Residue 120–127 coordinates GTP; the sequence is GAPNAGKS. The interval 146 to 150 is G2; it reads HTTRS. Residues 167-170 form a G3 region; sequence DTPG. A GTP-binding site is contributed by 167 to 171; it reads DTPGL. Serine 173 is modified (phosphoserine). 236–239 contributes to the GTP binding site; that stretch reads NKVD. Residues 236-239 are G4; sequence NKVD. A disordered region spans residues 264–296; sequence LKTKQALRSRPDTHCPSPAAQGPNPQPVRDPQQ. The tract at residues 308 to 310 is G5; it reads LSA. The KH type-2 domain occupies 360-437; sequence LPEEVPYNVQ…QLRLSVKLLK (78 aa).

Belongs to the TRAFAC class TrmE-Era-EngA-EngB-Septin-like GTPase superfamily. Era GTPase family.

The protein resides in the mitochondrion matrix. It is found in the mitochondrion inner membrane. In terms of biological role, probable GTPase that plays a role in the mitochondrial ribosomal small subunit assembly. Specifically binds the 12S mitochondrial rRNA (12S mt-rRNA) to a 33 nucleotide section delineating the 3' terminal stem-loop region. May act as a chaperone that protects the 12S mt-rRNA on the 28S mitoribosomal subunit during ribosomal small subunit assembly. In Bos taurus (Bovine), this protein is GTPase Era, mitochondrial (ERAL1).